The following is a 106-amino-acid chain: Acidic phospholipase A2 PhTX-III (106 aa).

The Ca(2+) site is built by Y23, G25, and G27. Cystine bridges form between C24/C40, C39/C75, C45/C106, C46/C68, and C55/C66. The active site involves H43. Residue D44 participates in Ca(2+) binding. The active site involves D69.

Requires Ca(2+) as cofactor. As to expression, expressed by the venom gland.

The protein localises to the secreted. It carries out the reaction a 1,2-diacyl-sn-glycero-3-phosphocholine + H2O = a 1-acyl-sn-glycero-3-phosphocholine + a fatty acid + H(+). Its activity is regulated as follows. Partially inhibited by magnesium ions and completely inhibited by zinc ions These divalent cations may act as competitive antagonists of the cofactor. Its function is as follows. Snake venom phospholipase A2 (PLA2) that induces inflammatory response, with local edema and release of cytokines IL-1 alpha, IL-6 and TNF-alpha. Does not exhibit myotoxic, anticoagulant and antibacterial effects. Release of pro-inflammatory cytokines may be due to mast cell degranulation, and edema may be induced by arachidonic acid that results from the PLA2 catalytic activity. PLA2 catalyzes the calcium-dependent hydrolysis of the 2-acyl groups in 3-sn-phosphoglycerides. The polypeptide is Acidic phospholipase A2 PhTX-III (Bothrocophias hyoprora (Amazonian hognose viper)).